The primary structure comprises 257 residues: Acetylglutamate kinase (257 aa).

Substrate-binding positions include 43–44 (GG), Arg-65, and Asn-157.

The protein belongs to the acetylglutamate kinase family. ArgB subfamily.

The protein localises to the cytoplasm. The enzyme catalyses N-acetyl-L-glutamate + ATP = N-acetyl-L-glutamyl 5-phosphate + ADP. Its pathway is amino-acid biosynthesis; L-arginine biosynthesis; N(2)-acetyl-L-ornithine from L-glutamate: step 2/4. Its function is as follows. Catalyzes the ATP-dependent phosphorylation of N-acetyl-L-glutamate. This chain is Acetylglutamate kinase, found in Mannheimia succiniciproducens (strain KCTC 0769BP / MBEL55E).